Here is a 546-residue protein sequence, read N- to C-terminus: Glucose-6-phosphate isomerase (546 aa).

The active-site Proton donor is glutamate 357. Catalysis depends on residues histidine 389 and lysine 509.

Belongs to the GPI family.

It is found in the cytoplasm. It catalyses the reaction alpha-D-glucose 6-phosphate = beta-D-fructose 6-phosphate. It functions in the pathway carbohydrate biosynthesis; gluconeogenesis. The protein operates within carbohydrate degradation; glycolysis; D-glyceraldehyde 3-phosphate and glycerone phosphate from D-glucose: step 2/4. In terms of biological role, catalyzes the reversible isomerization of glucose-6-phosphate to fructose-6-phosphate. The sequence is that of Glucose-6-phosphate isomerase from Anaeromyxobacter sp. (strain K).